Reading from the N-terminus, the 157-residue chain is uncharacterized protein (157 aa).

The helical transmembrane segment at 6–26 (LVGGVLRVLVVVGAVFDVAVL) threads the bilayer. Positions 33–157 (ADGPVQLKSR…APDQQWDSVP (125 aa)) constitute a Ricin B-type lectin domain.

The protein localises to the membrane. This is an uncharacterized protein from Mycobacterium tuberculosis (strain CDC 1551 / Oshkosh).